Reading from the N-terminus, the 549-residue chain is MDLMQMDKRLDSTEQVVEEIMRIHRSLPARPGIDEVEAAKGLIDNVEKEDQACLEAIARQRKSSEVPGELFMVLQEMKKGYVQFRSKEQIREALKLLDLESVHSLFDDFIQRASNCIASPSSNGSVSSRPPLPPATTTAARSDSQSSLNFSERAPVRPKDMVSRDDSFVTKSKPSSLYSDGFAAPPRRPQILDSTLTTGNDGEKLSLIKLASLIEVSAKKATQEINLQNKLTEQLEWLPDSLGKLSSLTSLDLSENHIVVLPNTIGGLSSLTKLDLHSNRIGQLPESIGELLNLVYLNLGSNQLSSLPSAFSRLVRLEELDLSCNNLPILPESIGSLVSLKKLDVETNDIEEIPYSIGGCSSLIELRADYNKLKALPEAIGKITTLEILSVRYNNIRQLPTTMSSLASLKELDVSFNELESVPESLCFATTLVKLNIGNNFADMVSLPRSIGNLEMLEELDISNNQIRVLPDSFKMLTKLRVFRAQENPLHIPPRDIAEKGPQAVVQYMNDLVETRNAKSLMVKPKKSWVQMCFFSKSNKRKQSSMEIV.

Positions 119-140 (SPSSNGSVSSRPPLPPATTTAA) are enriched in low complexity. The interval 119 to 167 (SPSSNGSVSSRPPLPPATTTAARSDSQSSLNFSERAPVRPKDMVSRDDS) is disordered. A compositionally biased stretch (polar residues) spans 141-150 (RSDSQSSLNF). Positions 154-167 (APVRPKDMVSRDDS) are enriched in basic and acidic residues. Ser167 carries the phosphoserine modification. 11 LRR repeats span residues 245–268 (LSSL…IGGL), 269–291 (SSLT…IGEL), 293–313 (NLVY…AFSR), 314–337 (LVRL…IGSL), 339–360 (SLKK…IGGC), 362–383 (SLIE…IGKI), 384–406 (TTLE…MSSL), 407–430 (ASLK…CFAT), 432–454 (LVKL…IGNL), 455–476 (EMLE…SFKM), and 478–500 (TKLR…IAEK). The GVYW; degenerate motif lies at 501–508 (GPQAVVQY).

It belongs to the SHOC2 family. As to expression, widely expressed.

In terms of biological role, leucine-rich repeat protein that likely mediates protein interactions, possibly in the context of signal transduction. This is Plant intracellular Ras-group-related LRR protein 4 (PIRL4) from Arabidopsis thaliana (Mouse-ear cress).